The chain runs to 250 residues: HTH-type transcriptional regulator SarS (250 aa).

2 consecutive DNA-binding regions (H-T-H motif) follow at residues 53–76 (FKKI…VLVK) and 177–200 (LKDL…NLKK).

It belongs to the SarA family.

It localises to the cytoplasm. Its function is as follows. Transcriptional regulator that controls expression of some virulence factors in a cell density-dependent manner. The sequence is that of HTH-type transcriptional regulator SarS (sarS) from Staphylococcus aureus (strain Mu3 / ATCC 700698).